The sequence spans 500 residues: Protein FAM114A2 (500 aa).

The tract at residues 1–82 (MSNKDDLETA…AAGKETVSKD (82 aa)) is disordered. 3 positions are modified to phosphoserine: Ser93, Ser152, and Ser215.

This sequence belongs to the FAM114 family.

This Bos taurus (Bovine) protein is Protein FAM114A2 (FAM114A1).